The primary structure comprises 261 residues: Small ribosomal subunit protein uS2 (261 aa).

N-acetylserine is present on serine 2. The interval 215-261 (AEEAKTTEDVEEAAPVDADEWTGETEEVDWAESGATPAVEDAAASNW) is disordered. A compositionally biased stretch (acidic residues) spans 223–244 (DVEEAAPVDADEWTGETEEVDW).

It belongs to the universal ribosomal protein uS2 family. Component of the small ribosomal subunit. Mature ribosomes consist of a small (40S) and a large (60S) subunit. The 40S subunit contains about 33 different proteins and 1 molecule of RNA (18S). The 60S subunit contains about 49 different proteins and 3 molecules of RNA (25S, 5.8S and 5S). Interacts with RPS21.

It is found in the cytoplasm. Required for the assembly and/or stability of the 40S ribosomal subunit. Required for the processing of the 20S rRNA-precursor to mature 18S rRNA in a late step of the maturation of 40S ribosomal subunits. The protein is Small ribosomal subunit protein uS2 of Scheffersomyces stipitis (strain ATCC 58785 / CBS 6054 / NBRC 10063 / NRRL Y-11545) (Yeast).